The following is a 95-amino-acid chain: Defensin-A3 (95 aa).

A signal peptide spans 1–19 (MRTLGLLLALLFLAAQTPA). The propeptide occupies 20–61 (QLMGEEAEEATGRPEATEAQEAAAALMAARAADRHVTDPEQQ). Disulfide bonds link cysteine 66–cysteine 93, cysteine 68–cysteine 82, and cysteine 72–cysteine 92.

This sequence belongs to the alpha-defensin family. Highly expressed in spleen, and expressed at lower levels in intestin and lung.

It localises to the secreted. Has antimicrobial activity. The sequence is that of Defensin-A3 from Ornithorhynchus anatinus (Duckbill platypus).